A 285-amino-acid chain; its full sequence is V-set and transmembrane domain-containing protein 2B (285 aa).

The N-terminal stretch at 1–28 (MEQRNRLGALGYLPPLLLHALLLFVADA) is a signal peptide. The region spanning 29–143 (AFTEVPKDVT…DDDTQEHKAQ (115 aa)) is the Ig-like V-type domain. At 29 to 263 (AFTEVPKDVT…HGSGTGRSYT (235 aa)) the chain is on the extracellular side. C49 and C127 are joined by a disulfide. The disordered stretch occupies residues 161 to 226 (EAVSHIQSSG…EAAAASAAHT (66 aa)). Composition is skewed to low complexity over residues 177–189 (ASAA…GAAS) and 208–226 (PAAI…AAHT). The helical transmembrane segment at 264–284 (TDPLLSLLLLALHKFLRLLLG) threads the bilayer. A topological domain (cytoplasmic) is located at residue H285.

The protein resides in the membrane. This Homo sapiens (Human) protein is V-set and transmembrane domain-containing protein 2B (VSTM2B).